Reading from the N-terminus, the 299-residue chain is 4-hydroxybenzoate octaprenyltransferase (299 aa).

A run of 8 helical transmembrane segments spans residues 33–53 (VGFL…ADGV), 56–76 (WWTL…GCVI), 107–127 (LLMF…MNQL), 151–171 (LPQV…FAAI), 180–200 (WLLY…YAMV), 213–233 (IAIL…TLML), 247–267 (HTYW…FIIA), and 278–298 (AFMH…LATT).

This sequence belongs to the UbiA prenyltransferase family. Requires Mg(2+) as cofactor.

The protein localises to the cell inner membrane. The enzyme catalyses all-trans-octaprenyl diphosphate + 4-hydroxybenzoate = 4-hydroxy-3-(all-trans-octaprenyl)benzoate + diphosphate. The protein operates within cofactor biosynthesis; ubiquinone biosynthesis. Functionally, catalyzes the prenylation of para-hydroxybenzoate (PHB) with an all-trans polyprenyl group. Mediates the second step in the final reaction sequence of ubiquinone-8 (UQ-8) biosynthesis, which is the condensation of the polyisoprenoid side chain with PHB, generating the first membrane-bound Q intermediate 3-octaprenyl-4-hydroxybenzoate. The polypeptide is 4-hydroxybenzoate octaprenyltransferase (Xylella fastidiosa (strain M12)).